Consider the following 867-residue polypeptide: GATOR2 complex protein Mio (867 aa).

WD repeat units follow at residues 51–86, 100–144, 149–188, 190–228, and 231–272; these read ANES…GICN, RQQR…PKET, GVGE…ATCQ, IQTK…SPLR, and QSSK…TDNS. The segment covering 350 to 376 has biased composition (low complexity); sequence PASPTSTAATPTQQQPTSSCSTNSGSS. A disordered region spans residues 350–378; that stretch reads PASPTSTAATPTQQQPTSSCSTNSGSSLD. The segment at 739-777 adopts a C4-type zinc-finger fold; sequence LSCNFCGKSVSNALLDEPRPRSTTTSTNRLSSCPSCRKP. Residues cysteine 741, cysteine 744, cysteine 771, cysteine 774, cysteine 784, cysteine 821, cysteine 824, histidine 826, histidine 829, histidine 832, cysteine 843, cysteine 848, and cysteine 852 each contribute to the Zn(2+) site. An RING-type; atypical zinc finger spans residues 778-857; the sequence is LPRCSLCLMH…CNCRCFDMDG (80 aa).

This sequence belongs to the WD repeat mio family. Component of the GATOR complex consisting of mio, Nup44A/Seh1, Im11, Nplr3, Nplr2, Wdr24, Wdr59 and Sec13. Within the GATOR complex, probable component of the GATOR2 subcomplex which is likely composed of mio, Nup44A/Seh1, Wdr24, Wdr59 and Sec13. Interacts with Wdr24. Interacts with nucleoporin Nup44A/Seh1. The GATOR2 complex associates with unmet in the absence of S-adenosyl-L-methionine; the mio-Wdr24-Nup44A subcomplex is essential and sufficient for this interaction while Wdr59 and Sec13 are dispensable. This association acts as a nutrient sensor to inhibit mTORC1 signaling in the absence of methionine. Present in the oocyte.

The protein resides in the nucleus. Its subcellular location is the lysosome. Its function is as follows. An essential component of the GATOR subcomplex GATOR2 which functions as an activator of the amino acid-sensing branch of the mTORC1 signaling pathway. The two GATOR subcomplexes, GATOR1 and GATOR2, regulate the mTORC1 pathway in order to mediate metabolic homeostasis, female gametogenesis and the response to amino acid limitation and complete starvation. GATOR2 activates the mTORC1 signaling pathway through the inhibition of the GATOR1 subcomplex, controlling the switch to cell proliferation and growth under nutrient replete conditions and during female oocyte development. This component is required for activating mTORC1 specifically in germline cells to promote cell growth and maintain the oocyte fate. GATOR1 and GATOR2 act at different stages of oogenesis to regulate mTORC1 in order to control meiotic entry and promote oocyte growth and development. After exactly four mitotic cyst divisions, the GATOR1 complex members (Iml1, Nprl2 and Nprl3) down-regulate mTORC1 to slow cellular metabolism and promote the mitotic/meiotic transition. At later stages of oogenesis, the mio and Nup44A components of the GATOR2 complex inhibit GATOR1 and thus activate mTORC1 to promote meiotic progression, and drive oocyte growth and development. In addition to its role in the regulation of the mTORC1 complex, functions independently of mTORC1 to prevent the inappropriate accumulation of autolysosomes in germline tissues. This chain is GATOR2 complex protein Mio, found in Drosophila melanogaster (Fruit fly).